We begin with the raw amino-acid sequence, 271 residues long: Calretinin (271 aa).

EF-hand domains follow at residues 16–51 (LTASQFLEIWKHFDADGNGYIEGKELENFFQELEKA), 63–98 (NFGEKMKEFMQKYDKNSDGKIEMAELAQILPTEENF), 107–142 (GSSAEFMEAWRKYDTDRSGYIEANELKGFLSDLLKK), 151–186 (KLQEYTQTILRMFDLNGDGKLGLSEMSRLLPVQENF), 195–230 (LTSEEFNAIFTFYDKDRSGYIDEHELDALLKDLYEK), and 235–270 (MNIQQLTNYRKSVMSLAEAGKLYRKDLEIVLCSEPP). Residues Asp-29, Asp-31, Asn-33, Tyr-35, Glu-40, Asp-76, Asn-78, Asp-80, Lys-82, Glu-87, Asp-120, Asp-122, Ser-124, Tyr-126, Glu-131, Asp-164, Asn-166, Asp-168, Lys-170, Glu-175, Asp-208, Asp-210, Ser-212, Tyr-214, and Glu-219 each coordinate Ca(2+). Tyr-214 carries the post-translational modification Phosphotyrosine.

Belongs to the calbindin family. As to expression, brain.

Its subcellular location is the synapse. The protein resides in the cell projection. It is found in the dendrite. In terms of biological role, calcium-binding protein involved in calcium homeostasis and signal transduction. It plays a critical role in buffering intracellular calcium levels and modulating calcium-dependent signaling pathways. Predominantly expressed in specific neuronal populations, influences synaptic plasticity and neuronal excitability, contributing to learning and memory. During embryonic development, it facilitates neuronal differentiation and maturation. The sequence is that of Calretinin from Homo sapiens (Human).